Reading from the N-terminus, the 389-residue chain is Putative glutamate--cysteine ligase 2 (389 aa).

Belongs to the glutamate--cysteine ligase type 2 family. YbdK subfamily.

It carries out the reaction L-cysteine + L-glutamate + ATP = gamma-L-glutamyl-L-cysteine + ADP + phosphate + H(+). In terms of biological role, ATP-dependent carboxylate-amine ligase which exhibits weak glutamate--cysteine ligase activity. The polypeptide is Putative glutamate--cysteine ligase 2 (Rhodospirillum rubrum (strain ATCC 11170 / ATH 1.1.1 / DSM 467 / LMG 4362 / NCIMB 8255 / S1)).